The following is a 141-amino-acid chain: Probable mitochondrial pyruvate carrier 1 (141 aa).

2 helical membrane-spanning segments follow: residues 31 to 52 (YLCS…AAIL) and 60 to 82 (LISG…YAWM).

It belongs to the mitochondrial pyruvate carrier (MPC) (TC 2.A.105) family. As to quaternary structure, the functional 150 kDa pyruvate import complex is a heteromer of mpc1 and mpc2.

It localises to the mitochondrion. The protein localises to the mitochondrion inner membrane. In terms of biological role, mediates the uptake of pyruvate into mitochondria. The sequence is that of Probable mitochondrial pyruvate carrier 1 from Schizosaccharomyces pombe (strain 972 / ATCC 24843) (Fission yeast).